The sequence spans 125 residues: Small ribosomal subunit protein uS12 (125 aa).

D89 bears the 3-methylthioaspartic acid mark.

Belongs to the universal ribosomal protein uS12 family. As to quaternary structure, part of the 30S ribosomal subunit. Contacts proteins S8 and S17. May interact with IF1 in the 30S initiation complex.

Functionally, with S4 and S5 plays an important role in translational accuracy. Its function is as follows. Interacts with and stabilizes bases of the 16S rRNA that are involved in tRNA selection in the A site and with the mRNA backbone. Located at the interface of the 30S and 50S subunits, it traverses the body of the 30S subunit contacting proteins on the other side and probably holding the rRNA structure together. The combined cluster of proteins S8, S12 and S17 appears to hold together the shoulder and platform of the 30S subunit. The chain is Small ribosomal subunit protein uS12 from Acidovorax sp. (strain JS42).